Reading from the N-terminus, the 200-residue chain is SKP1-like protein 19 (200 aa).

Over residues 67–92 (DDVVETHESSTKGDKTVEEAKKKPDD) the composition is skewed to basic and acidic residues. A disordered region spans residues 67–109 (DDVVETHESSTKGDKTVEEAKKKPDDVAVPESTEGDDEAEDKK). The tract at residues 132–190 (ILAANYLNVQGLFDLCSKTIADYIKDMTPEEVRELFNIENDFTPEEEEAIRNENAWTFE) is interaction with the F-box domain of F-box proteins.

The protein belongs to the SKP1 family. Part of a SCF (SKP1-cullin-F-box) protein ligase complex. Interacts with CPR1/CPR30. In terms of tissue distribution, expressed in leaves and flowers.

Its subcellular location is the nucleus. It functions in the pathway protein modification; protein ubiquitination. In terms of biological role, involved in ubiquitination and subsequent proteasomal degradation of target proteins. Together with CUL1, RBX1 and a F-box protein, it forms a SCF E3 ubiquitin ligase complex. The functional specificity of this complex depends on the type of F-box protein. In the SCF complex, it serves as an adapter that links the F-box protein to CUL1. The polypeptide is SKP1-like protein 19 (ASK19) (Arabidopsis thaliana (Mouse-ear cress)).